The following is a 272-amino-acid chain: MKRTAFFISDGTGITAETLGQSLLAQFESIPFNKFTRPYIDSPDKARTMVQQINAAAERDGVRPIIFDTIVNQDIREILATSNGFMIDIFSSFLSPLEQELTAHSSYSVGKSHSIGGNSNYMERIEAVNFALDNDDGARTHYYDKADLILVGVSRCGKTPTCLYMAMQFGIRAANYPLTEDDMERLQLPAVLKKHHNKLFGLTIDPDRLTAIRHERKPNSRYSSFAQCEFEVREVESLFRRENIPNINSTHFSVEEISAKILVEKGVERRFK.

152–159 (GVSRCGKT) provides a ligand contact to ADP.

It belongs to the pyruvate, phosphate/water dikinase regulatory protein family. PSRP subfamily.

It carries out the reaction [pyruvate, water dikinase] + ADP = [pyruvate, water dikinase]-phosphate + AMP + H(+). The enzyme catalyses [pyruvate, water dikinase]-phosphate + phosphate + H(+) = [pyruvate, water dikinase] + diphosphate. Its function is as follows. Bifunctional serine/threonine kinase and phosphorylase involved in the regulation of the phosphoenolpyruvate synthase (PEPS) by catalyzing its phosphorylation/dephosphorylation. The polypeptide is Putative phosphoenolpyruvate synthase regulatory protein (Pseudomonas putida (strain GB-1)).